Here is a 324-residue protein sequence, read N- to C-terminus: Thiazole synthase (324 aa).

The active-site Schiff-base intermediate with DXP is lysine 167. Residues glycine 228, 254–255 (AG), and 276–277 (NT) each bind 1-deoxy-D-xylulose 5-phosphate.

This sequence belongs to the ThiG family. As to quaternary structure, homotetramer. Forms heterodimers with either ThiH or ThiS.

Its subcellular location is the cytoplasm. The enzyme catalyses [ThiS sulfur-carrier protein]-C-terminal-Gly-aminoethanethioate + 2-iminoacetate + 1-deoxy-D-xylulose 5-phosphate = [ThiS sulfur-carrier protein]-C-terminal Gly-Gly + 2-[(2R,5Z)-2-carboxy-4-methylthiazol-5(2H)-ylidene]ethyl phosphate + 2 H2O + H(+). It participates in cofactor biosynthesis; thiamine diphosphate biosynthesis. Its function is as follows. Catalyzes the rearrangement of 1-deoxy-D-xylulose 5-phosphate (DXP) to produce the thiazole phosphate moiety of thiamine. Sulfur is provided by the thiocarboxylate moiety of the carrier protein ThiS. In vitro, sulfur can be provided by H(2)S. The chain is Thiazole synthase from Paramagnetospirillum magneticum (strain ATCC 700264 / AMB-1) (Magnetospirillum magneticum).